The sequence spans 349 residues: Isopentenyl-diphosphate delta-isomerase (349 aa).

9-10 (RK) serves as a coordination point for substrate. FMN is bound by residues 65–67 (AMT), S95, and N124. 95-97 (STH) is a binding site for substrate. Q154 contributes to the substrate binding site. Residue E155 coordinates Mg(2+). FMN is bound by residues K186, S211, T216, 262 to 264 (GVR), and 283 to 284 (SR).

This sequence belongs to the IPP isomerase type 2 family. In terms of assembly, homooctamer. Dimer of tetramers. FMN is required as a cofactor. Requires NADPH as cofactor. Mg(2+) serves as cofactor.

It is found in the cytoplasm. The enzyme catalyses isopentenyl diphosphate = dimethylallyl diphosphate. Its function is as follows. Involved in the biosynthesis of isoprenoids. Catalyzes the 1,3-allylic rearrangement of the homoallylic substrate isopentenyl (IPP) to its allylic isomer, dimethylallyl diphosphate (DMAPP). The chain is Isopentenyl-diphosphate delta-isomerase from Staphylococcus haemolyticus (strain JCSC1435).